Reading from the N-terminus, the 2198-residue chain is RNA-directed RNA polymerase L (2198 aa).

An endonuclease region spans residues 26–284 (KEALLSQVEV…AHSDSLAPEC (259 aa)). Mn(2+) contacts are provided by Glu-51, Asp-89, and Glu-102. The active site involves Lys-115. In terms of domain architecture, RdRp catalytic spans 1161–1359 (CDMKMAVNNG…FLSSKFNKFV (199 aa)). Asp-1319 is a Mg(2+) binding site.

It belongs to the Bunyavirales RNA polymerase family. As to quaternary structure, homomultimer; the oligomeric structure is essential for the polymerase activity. Interacts with nucleoprotein N. Interacts with protein Z; this interaction inhibits viral transcription and replication, Z partially blocks the product exit tunnel for the releasing nascent RNA product. Mn(2+) is required as a cofactor. It depends on Mg(2+) as a cofactor.

It localises to the virion. It is found in the host cytoplasm. The enzyme catalyses RNA(n) + a ribonucleoside 5'-triphosphate = RNA(n+1) + diphosphate. Its function is as follows. RNA-dependent RNA polymerase, which is responsible for the replication and transcription of the viral RNA genome using antigenomic RNA as an intermediate. During transcription, synthesizes subgenomic RNAs and assures their capping by a cap-snatching mechanism, which involves the endonuclease activity cleaving the host capped pre-mRNAs. These short capped RNAs are then used as primers for viral transcription. The 3'-end of subgenomic mRNAs molecules are heterogeneous and not polyadenylated. The replicase function is to direct synthesis of antigenomic and genomic RNA which are encapsidated and non capped. As a consequence of the use of the same enzyme for both transcription and replication, these mechanisms need to be well coordinated. These processes may be regulated by proteins N and Z in a dose-dependent manner. Z protein inhibits the viral polymerase L und thus the viral transcription and RNA synthesis. The chain is RNA-directed RNA polymerase L from Homo sapiens (Human).